A 445-amino-acid polypeptide reads, in one-letter code: rRNA methyltransferase 3B, mitochondrial (445 aa).

The transit peptide at Met1–Ala37 directs the protein to the mitochondrion. Disordered stretches follow at residues Glu52–Val90 and His311–Gly334. 3 stretches are compositionally biased toward polar residues: residues Val54 to Thr70, Ile78 to Val90, and His311 to Pro324. Gly387, Ile411, and Leu420 together coordinate S-adenosyl-L-methionine.

The protein belongs to the class IV-like SAM-binding methyltransferase superfamily. RNA methyltransferase TrmH family.

The protein localises to the mitochondrion. It carries out the reaction a uridine in rRNA + S-adenosyl-L-methionine = a 2'-O-methyluridine in rRNA + S-adenosyl-L-homocysteine + H(+). S-adenosyl-L-methionine-dependent 2'-O-ribose methyltransferase that catalyzes the formation of 2'-O-methylguanosine at position 1485 (Gm1485) in the mitochondrial large subunit ribosomal RNA (mtLSU rRNA), a conserved modification in the peptidyl transferase domain of the mtLSU rRNA. Also required for formation of 2'-O-methyluridine at position 1484 (Um1484) mediated by MRM2. In Danio rerio (Zebrafish), this protein is rRNA methyltransferase 3B, mitochondrial.